The chain runs to 652 residues: Na(+)/H(+) antiporter NhaA 1 (652 aa).

A na(+)/H(+) antiporter NhaA region spans residues Met-1 to Val-427. Helical transmembrane passes span Ala-27–Leu-47, Leu-78–Val-98, Thr-114–Phe-134, Val-142–Leu-162, Phe-173–Tyr-193, Thr-200–Gly-220, Leu-227–Val-247, Leu-312–Ala-332, Val-343–Ala-363, Trp-376–Ile-396, and Ile-411–Ala-431. The 196-residue stretch at Phe-428–Ala-623 folds into the Thioredoxin domain. The segment at Arg-626–Thr-652 is disordered. The segment covering Arg-628–Gly-642 has biased composition (basic and acidic residues).

The protein in the N-terminal section; belongs to the NhaA Na(+)/H(+) (TC 2.A.33) antiporter family.

The protein localises to the cell membrane. The catalysed reaction is Na(+)(in) + 2 H(+)(out) = Na(+)(out) + 2 H(+)(in). Its function is as follows. Na(+)/H(+) antiporter that extrudes sodium in exchange for external protons. The polypeptide is Na(+)/H(+) antiporter NhaA 1 (Salinispora arenicola (strain CNS-205)).